A 425-amino-acid polypeptide reads, in one-letter code: Serine--tRNA ligase (425 aa).

230–232 serves as a coordination point for L-serine; it reads TAE. 261 to 263 is a binding site for ATP; sequence RSE. Residue E284 coordinates L-serine. 348-351 provides a ligand contact to ATP; that stretch reads EISS. Residue S383 coordinates L-serine.

This sequence belongs to the class-II aminoacyl-tRNA synthetase family. Type-1 seryl-tRNA synthetase subfamily. As to quaternary structure, homodimer. The tRNA molecule binds across the dimer.

It is found in the cytoplasm. The enzyme catalyses tRNA(Ser) + L-serine + ATP = L-seryl-tRNA(Ser) + AMP + diphosphate + H(+). It carries out the reaction tRNA(Sec) + L-serine + ATP = L-seryl-tRNA(Sec) + AMP + diphosphate + H(+). It functions in the pathway aminoacyl-tRNA biosynthesis; selenocysteinyl-tRNA(Sec) biosynthesis; L-seryl-tRNA(Sec) from L-serine and tRNA(Sec): step 1/1. Its function is as follows. Catalyzes the attachment of serine to tRNA(Ser). Is also able to aminoacylate tRNA(Sec) with serine, to form the misacylated tRNA L-seryl-tRNA(Sec), which will be further converted into selenocysteinyl-tRNA(Sec). This chain is Serine--tRNA ligase, found in Ligilactobacillus salivarius (strain UCC118) (Lactobacillus salivarius).